Consider the following 346-residue polypeptide: tRNA N6-adenosine threonylcarbamoyltransferase (346 aa).

Residues His111 and His115 each coordinate Fe cation. Residues 134–138, Asp167, Gly180, Asp184, and Asn280 contribute to the substrate site; that span reads LVSGG. A Fe cation-binding site is contributed by Asp308.

Belongs to the KAE1 / TsaD family. It depends on Fe(2+) as a cofactor.

The protein localises to the cytoplasm. The catalysed reaction is L-threonylcarbamoyladenylate + adenosine(37) in tRNA = N(6)-L-threonylcarbamoyladenosine(37) in tRNA + AMP + H(+). In terms of biological role, required for the formation of a threonylcarbamoyl group on adenosine at position 37 (t(6)A37) in tRNAs that read codons beginning with adenine. Is involved in the transfer of the threonylcarbamoyl moiety of threonylcarbamoyl-AMP (TC-AMP) to the N6 group of A37, together with TsaE and TsaB. TsaD likely plays a direct catalytic role in this reaction. This Crocosphaera subtropica (strain ATCC 51142 / BH68) (Cyanothece sp. (strain ATCC 51142)) protein is tRNA N6-adenosine threonylcarbamoyltransferase.